A 150-amino-acid polypeptide reads, in one-letter code: MEDYALTFGINPFIALMIQPIVTMTVVDNQGLGLPVDIQHKAKPSPKASQMLPPDLGPPSFQNLLSPSEKLEPWDPGMRKLTVQTCGLTFIHPAGHGLCHPTAEASAETLSSTALNRPSVREGACNEKSTENKKPQDSVLWSHSRWFQGN.

The segment at 118–137 is disordered; that stretch reads PSVREGACNEKSTENKKPQD. Positions 124-136 are enriched in basic and acidic residues; it reads ACNEKSTENKKPQ.

Belongs to the reduced folate carrier (RFC) transporter (TC 2.A.48) family.

This Homo sapiens (Human) protein is Putative solute carrier family 19 member 4.